We begin with the raw amino-acid sequence, 103 residues long: UPF0235 protein Rleg2_3707 (103 aa).

Belongs to the UPF0235 family.

In Rhizobium leguminosarum bv. trifolii (strain WSM2304), this protein is UPF0235 protein Rleg2_3707.